The following is a 315-amino-acid chain: Prephenate dehydratase (315 aa).

The 188-residue stretch at 3-190 (RIAYLGPQGT…ARTRFVLVGR (188 aa)) folds into the Prephenate dehydratase domain. Residues 204-281 (SVALRLPNTP…EDVRYLGSWP (78 aa)) enclose the ACT domain.

As to quaternary structure, homodimer.

It catalyses the reaction prephenate + H(+) = 3-phenylpyruvate + CO2 + H2O. It functions in the pathway amino-acid biosynthesis; L-phenylalanine biosynthesis; phenylpyruvate from prephenate: step 1/1. The polypeptide is Prephenate dehydratase (pheA) (Mycobacterium sp. (strain KMS)).